The following is a 299-amino-acid chain: Oxygen-dependent coproporphyrinogen-III oxidase (299 aa).

Serine 92 is a substrate binding site. Histidine 96 and histidine 106 together coordinate a divalent metal cation. Histidine 106 serves as the catalytic Proton donor. 108 to 110 (NVR) is a substrate binding site. Positions 145 and 175 each coordinate a divalent metal cation. Residues 240-275 (YVEFNLVWDRGTLFGLQTGGRTESILMSMPPLVRWE) are important for dimerization. Position 258–260 (258–260 (GGR)) interacts with substrate.

Belongs to the aerobic coproporphyrinogen-III oxidase family. As to quaternary structure, homodimer. It depends on a divalent metal cation as a cofactor.

The protein localises to the cytoplasm. The enzyme catalyses coproporphyrinogen III + O2 + 2 H(+) = protoporphyrinogen IX + 2 CO2 + 2 H2O. The protein operates within porphyrin-containing compound metabolism; protoporphyrin-IX biosynthesis; protoporphyrinogen-IX from coproporphyrinogen-III (O2 route): step 1/1. Its function is as follows. Involved in the heme biosynthesis. Catalyzes the aerobic oxidative decarboxylation of propionate groups of rings A and B of coproporphyrinogen-III to yield the vinyl groups in protoporphyrinogen-IX. In Klebsiella pneumoniae (strain 342), this protein is Oxygen-dependent coproporphyrinogen-III oxidase.